Reading from the N-terminus, the 418-residue chain is Metacaspase-2 (418 aa).

The tract at residues 68–113 (PSPYTHAPHAPSPFNHAPPDSYPFTHAPPASSPFNHAPPGPPPPVH) is disordered. Residues 70–80 (PYTHAPHAPSP) show a composition bias toward low complexity. A compositionally biased stretch (pro residues) spans 103–112 (HAPPGPPPPV). Active-site residues include His-200 and Cys-256. The tract at residues 385 to 406 (PDEEEEVNQAPQKTQEPQLSAN) is disordered. Over residues 393 to 405 (QAPQKTQEPQLSA) the composition is skewed to polar residues.

The protein belongs to the peptidase C14B family.

In terms of biological role, acts as a negative regulator of oxidative stress cell death and hypersensitive cell death response mediated by immune response. Acts via indirect or direct regulation of AMC1 at postranscriptional level. In Arabidopsis thaliana (Mouse-ear cress), this protein is Metacaspase-2 (AMC2).